Reading from the N-terminus, the 196-residue chain is Pyridoxine/pyridoxamine 5'-phosphate oxidase (196 aa).

FMN-binding positions include 46 to 51, 61 to 62, R67, K68, and Q90; these read RNVLYK and FT. Residue K51 participates in substrate binding. Residues Y108, R112, and S116 each contribute to the substrate site. FMN is bound by residues 125-126 and W169; that span reads QS. 175-177 is a binding site for substrate; sequence RLH. R179 is an FMN binding site.

Belongs to the pyridoxamine 5'-phosphate oxidase family. Homodimer. Requires FMN as cofactor.

It catalyses the reaction pyridoxamine 5'-phosphate + O2 + H2O = pyridoxal 5'-phosphate + H2O2 + NH4(+). The enzyme catalyses pyridoxine 5'-phosphate + O2 = pyridoxal 5'-phosphate + H2O2. It participates in cofactor metabolism; pyridoxal 5'-phosphate salvage; pyridoxal 5'-phosphate from pyridoxamine 5'-phosphate: step 1/1. Its pathway is cofactor metabolism; pyridoxal 5'-phosphate salvage; pyridoxal 5'-phosphate from pyridoxine 5'-phosphate: step 1/1. Catalyzes the oxidation of either pyridoxine 5'-phosphate (PNP) or pyridoxamine 5'-phosphate (PMP) into pyridoxal 5'-phosphate (PLP). This is Pyridoxine/pyridoxamine 5'-phosphate oxidase from Coxiella burnetii (strain RSA 493 / Nine Mile phase I).